The following is a 250-amino-acid chain: Probable fimbrial chaperone YfcS (250 aa).

The signal sequence occupies residues 1 to 28 (MSDLLCSAKLGAMTLALLLSATSLSALA).

It belongs to the periplasmic pilus chaperone family.

The protein resides in the periplasm. In terms of biological role, part of the yfcOPQRSUV fimbrial operon. Could contribute to adhesion to various surfaces in specific environmental niches. Increases adhesion to eukaryotic T24 bladder epithelial cells in the absence of fim genes. The sequence is that of Probable fimbrial chaperone YfcS (yfcS) from Escherichia coli (strain K12).